A 653-amino-acid polypeptide reads, in one-letter code: Phospholipid-transporting ATPase VD (653 aa).

At 1 to 375 the chain is on the cytoplasmic side; sequence MACNLCYEAE…GHWCYTRLSN (375 aa). ATP is bound by residues Glu14, Phe56, Lys80, Arg124, Thr204, Gly205, Asp206, 259 to 266, Arg293, and Lys299; that span reads GLIITGKT. Asp319 contacts Mg(2+). The ATP site is built by Asn322 and Asp323. Asp323 lines the Mg(2+) pocket. The chain crosses the membrane as a helical span at residues 376 to 396; the sequence is MILYFFYKNVAYVNLLFWYQF. Residues 397–407 lie on the Exoplasmic loop side of the membrane; sequence FCGFSGTSMTD. A helical transmembrane segment spans residues 408 to 428; the sequence is YWVLIFFNLLFTSAPPVIYGV. The Cytoplasmic segment spans residues 429–458; sequence LEKDVSAETLMQLPELYKSGQKSEAYLPHT. The chain crosses the membrane as a helical span at residues 459–480; it reads FWITLLDAFYQSLVCFFVPYFT. The Exoplasmic loop portion of the chain corresponds to 481–487; sequence YQGSDID. Residues 488–510 form a helical membrane-spanning segment; it reads IFAFGNPLNTAALFIILLHLIIE. Over 511–516 the chain is Cytoplasmic; that stretch reads SKSLTW. The helical transmembrane segment at 517 to 537 threads the bilayer; that stretch reads IHMLVITGSILSYFLFAIVFG. Residues 538–555 lie on the Exoplasmic loop side of the membrane; that stretch reads AMCVTCNPPSNPYWIMQE. The helical transmembrane segment at 556–580 threads the bilayer; sequence HVLDPVFYLVCILTTCIALLPRFVY. At 581–653 the chain is on the cytoplasmic side; sequence RGAGKMNQVT…AFEMARPCKD (73 aa).

The protein belongs to the cation transport ATPase (P-type) (TC 3.A.3) family. Type IV subfamily. As to quaternary structure, component of a P4-ATPase flippase complex which consists of a catalytic alpha subunit ATP10A and an accessory beta subunit TMEM30A. It depends on Mg(2+) as a cofactor. Post-translationally, autophosphorylated at the conserved aspartate of the P-type ATPase signature sequence.

The protein resides in the cell membrane. It localises to the endoplasmic reticulum membrane. The enzyme catalyses ATP + H2O + phospholipidSide 1 = ADP + phosphate + phospholipidSide 2.. It carries out the reaction a beta-D-glucosyl-(1&lt;-&gt;1')-N-acylsphing-4-enine(out) + ATP + H2O = a beta-D-glucosyl-(1&lt;-&gt;1')-N-acylsphing-4-enine(in) + ADP + phosphate + H(+). In terms of biological role, catalytic component of a P4-ATPase flippase complex, which catalyzes the hydrolysis of ATP coupled to the transport of glucosylceramide (GlcCer) from the outer to the inner leaflet of the plasma membrane. This is Phospholipid-transporting ATPase VD (ATP10D) from Macaca fascicularis (Crab-eating macaque).